The following is a 198-amino-acid chain: Ribonuclease HII (198 aa).

The 188-residue stretch at 11–198 folds into the RNase H type-2 domain; sequence ELIAGVDEVG…SPVRKLLENE (188 aa). Positions 17, 18, and 109 each coordinate a divalent metal cation.

Belongs to the RNase HII family. Mn(2+) serves as cofactor. Mg(2+) is required as a cofactor.

It localises to the cytoplasm. The catalysed reaction is Endonucleolytic cleavage to 5'-phosphomonoester.. Its function is as follows. Endonuclease that specifically degrades the RNA of RNA-DNA hybrids. In Mannheimia succiniciproducens (strain KCTC 0769BP / MBEL55E), this protein is Ribonuclease HII.